We begin with the raw amino-acid sequence, 433 residues long: Enolase (433 aa).

Residue Gln-167 coordinates (2R)-2-phosphoglycerate. Catalysis depends on Glu-209, which acts as the Proton donor. Positions 246, 291, and 318 each coordinate Mg(2+). The (2R)-2-phosphoglycerate site is built by Lys-343, Arg-372, Ser-373, and Lys-394. Residue Lys-343 is the Proton acceptor of the active site.

Belongs to the enolase family. Component of the RNA degradosome, a multiprotein complex involved in RNA processing and mRNA degradation. Requires Mg(2+) as cofactor.

It is found in the cytoplasm. It localises to the secreted. Its subcellular location is the cell surface. It catalyses the reaction (2R)-2-phosphoglycerate = phosphoenolpyruvate + H2O. Its pathway is carbohydrate degradation; glycolysis; pyruvate from D-glyceraldehyde 3-phosphate: step 4/5. In terms of biological role, catalyzes the reversible conversion of 2-phosphoglycerate (2-PG) into phosphoenolpyruvate (PEP). It is essential for the degradation of carbohydrates via glycolysis. This is Enolase from Histophilus somni (strain 129Pt) (Haemophilus somnus).